Reading from the N-terminus, the 845-residue chain is Tyrosine-protein phosphatase corkscrew (845 aa).

2 SH2 domains span residues W6–L101 and W111–F205. One can recognise a Tyrosine-protein phosphatase domain in the interval F227 to Y645. The PTPase insert (Cys/Ser-rich) stretch occupies residues I289 to T444. Residues S362–N402 are disordered. Composition is skewed to low complexity over residues S369–G378 and T388–P400. Phosphoserine is present on S419. Substrate contacts are provided by residues D545, C583–R589, and Q630. The active-site Phosphocysteine intermediate is the C583. The tract at residues D793–G824 is disordered.

It belongs to the protein-tyrosine phosphatase family. Non-receptor class subfamily. In terms of assembly, interacts with drpr isoform A. In terms of tissue distribution, expressed uniformly throughout all tissues during embryogenesis.

It is found in the cytoplasm. The catalysed reaction is O-phospho-L-tyrosyl-[protein] + H2O = L-tyrosyl-[protein] + phosphate. In terms of biological role, required in all receptor tyrosine kinase signaling pathways. Functions downstream of the receptor tyrosine kinase torso, acting in concert with D-Raf via tailless. Also functions downstream of Egfr (epidermal growth factor receptor) and btl (fibroblast growth factor receptor). The SH2 domain suggests that csw effects its role by mediating heteromeric protein interactions. Maternally required for normal determination of cell fates at the termini of the embryo. Required for cell fate specification of the ventral ectoderm, in the developing embryonic CNS and for embryonic tracheal cell migration. Functions during imaginal development for proper formation of adult structures such as eyes, aristae, L5 wing vein and the tarsal claw. Dephosphorylates drpr isoform A which is required for the inhibition by drpr isoform A of glial cell engulfment of axonal debris produced following axonal injury. The polypeptide is Tyrosine-protein phosphatase corkscrew (csw) (Drosophila melanogaster (Fruit fly)).